The sequence spans 338 residues: Aspartate-semialdehyde dehydrogenase (338 aa).

NADP(+)-binding positions include 13 to 16 (SGAV) and 41 to 42 (RS). Residue arginine 101 participates in phosphate binding. The active-site Acyl-thioester intermediate is cysteine 132. Residue glutamine 159 coordinates substrate. Position 162–163 (162–163 (SG)) interacts with NADP(+). Lysine 216 is a binding site for phosphate. Substrate is bound at residue arginine 238. The active-site Proton acceptor is the histidine 245. Asparagine 317 is an NADP(+) binding site.

This sequence belongs to the aspartate-semialdehyde dehydrogenase family. Homodimer.

It carries out the reaction L-aspartate 4-semialdehyde + phosphate + NADP(+) = 4-phospho-L-aspartate + NADPH + H(+). It functions in the pathway amino-acid biosynthesis; L-lysine biosynthesis via DAP pathway; (S)-tetrahydrodipicolinate from L-aspartate: step 2/4. The protein operates within amino-acid biosynthesis; L-methionine biosynthesis via de novo pathway; L-homoserine from L-aspartate: step 2/3. It participates in amino-acid biosynthesis; L-threonine biosynthesis; L-threonine from L-aspartate: step 2/5. Functionally, catalyzes the NADPH-dependent formation of L-aspartate-semialdehyde (L-ASA) by the reductive dephosphorylation of L-aspartyl-4-phosphate. The chain is Aspartate-semialdehyde dehydrogenase from Shewanella violacea (strain JCM 10179 / CIP 106290 / LMG 19151 / DSS12).